Here is a 42-residue protein sequence, read N- to C-terminus: Iota-conotoxin-like R11.15 (42 aa).

Cystine bridges form between cysteine 5–cysteine 19, cysteine 12–cysteine 22, cysteine 18–cysteine 27, and cysteine 21–cysteine 36.

This sequence belongs to the conotoxin I1 superfamily. Expressed by the venom duct.

Its subcellular location is the secreted. Functionally, iota-conotoxins bind to voltage-gated sodium channels (Nav) and act as agonists by shifting the voltage-dependence of activation to more hyperpolarized levels. Produces general excitatory symptoms. The chain is Iota-conotoxin-like R11.15 from Conus radiatus (Rayed cone).